The primary structure comprises 271 residues: Auxin-responsive protein IAA5 (271 aa).

Residues 1–96 (MSPPLEPHDY…RHGASSGSVA (96 aa)) form a disordered region. Composition is skewed to low complexity over residues 14 to 33 (SAAA…SPNP) and 40 to 50 (PRLTLRLGLPG). An EAR-like (transcriptional repression) motif is present at residues 44–48 (LRLGL). The PB1 domain maps to 151–255 (PLYVKVSMDG…RKLKIMRGSD (105 aa)).

It belongs to the Aux/IAA family. As to quaternary structure, homodimers and heterodimers.

It is found in the nucleus. In terms of biological role, aux/IAA proteins are short-lived transcriptional factors that function as repressors of early auxin response genes at low auxin concentrations. The protein is Auxin-responsive protein IAA5 (IAA5) of Oryza sativa subsp. japonica (Rice).